The sequence spans 261 residues: Hemin import ATP-binding protein HmuV (261 aa).

The ABC transporter domain occupies 5–241 (LTANAASFAI…DLLARVFDVD (237 aa)). 37–44 (GPNGAGKS) provides a ligand contact to ATP.

Belongs to the ABC transporter superfamily. Heme (hemin) importer (TC 3.A.1.14.5) family. The complex is composed of two ATP-binding proteins (HmuV), two transmembrane proteins (HmuU) and a solute-binding protein (HmuT).

The protein localises to the cell inner membrane. In terms of biological role, part of the ABC transporter complex HmuTUV involved in hemin import. Responsible for energy coupling to the transport system. This is Hemin import ATP-binding protein HmuV from Rhodopseudomonas palustris (strain BisB5).